The sequence spans 361 residues: Peptide chain release factor 1 (361 aa).

Q236 is modified (N5-methylglutamine). The tract at residues 286 to 306 (AADSQRAEARKGQVGSGDRSE) is disordered.

This sequence belongs to the prokaryotic/mitochondrial release factor family. Methylated by PrmC. Methylation increases the termination efficiency of RF1.

It is found in the cytoplasm. Its function is as follows. Peptide chain release factor 1 directs the termination of translation in response to the peptide chain termination codons UAG and UAA. This chain is Peptide chain release factor 1, found in Magnetococcus marinus (strain ATCC BAA-1437 / JCM 17883 / MC-1).